Consider the following 476-residue polypeptide: Bifunctional protein HldE (476 aa).

Residues 1 to 318 (MKPTLPNYDQ…AEAIHGSQDS (318 aa)) form a ribokinase region. 195-198 (NMLE) serves as a coordination point for ATP. D264 is a catalytic residue. Residues 344–476 (MTNGCFDILH…IIEAIKGGRG (133 aa)) form a cytidylyltransferase region.

In the N-terminal section; belongs to the carbohydrate kinase PfkB family. It in the C-terminal section; belongs to the cytidylyltransferase family. In terms of assembly, homodimer.

The enzyme catalyses D-glycero-beta-D-manno-heptose 7-phosphate + ATP = D-glycero-beta-D-manno-heptose 1,7-bisphosphate + ADP + H(+). It carries out the reaction D-glycero-beta-D-manno-heptose 1-phosphate + ATP + H(+) = ADP-D-glycero-beta-D-manno-heptose + diphosphate. Its pathway is nucleotide-sugar biosynthesis; ADP-L-glycero-beta-D-manno-heptose biosynthesis; ADP-L-glycero-beta-D-manno-heptose from D-glycero-beta-D-manno-heptose 7-phosphate: step 1/4. It functions in the pathway nucleotide-sugar biosynthesis; ADP-L-glycero-beta-D-manno-heptose biosynthesis; ADP-L-glycero-beta-D-manno-heptose from D-glycero-beta-D-manno-heptose 7-phosphate: step 3/4. Its function is as follows. Catalyzes the phosphorylation of D-glycero-D-manno-heptose 7-phosphate at the C-1 position to selectively form D-glycero-beta-D-manno-heptose-1,7-bisphosphate. In terms of biological role, catalyzes the ADP transfer from ATP to D-glycero-beta-D-manno-heptose 1-phosphate, yielding ADP-D-glycero-beta-D-manno-heptose. The protein is Bifunctional protein HldE of Aliivibrio fischeri (strain MJ11) (Vibrio fischeri).